The sequence spans 586 residues: MGPSERPSIGWTPKEAEMQIGPQPDGWSRGWKPGDRGAVPLPLSPALSFLLLFPLASALQPTPLPFPELRLVGGPSRCRGRLEVMHSGSWGSVCDDDWDVVDANVVCRQLGCGLALPVPRPLAFGQGRGPIFLDNVECRGQEASLSECGSRGWGVHNCFHYEDVAVLCDEFLHTQPPTRKVLTSMAPATALQNGKGEGSVRLVGGASPCQGRVEILHGGVWGTVCDDDWGLQDAAVVCRQLGCGVALAATTNAFFGYGTGHILLDNVHCEGGEPRLAACQSLGWGVHNCGHHEDAGVLCAVLSPPTSTALPPSVTKEDWARHTGPAATGVGASPSRDTVWLTTAARASGKKSGRLRLVGGPSPCRGRVEVLYAGGWGTVCDDDWDFADARVACREAGCGPALGATGLGHFGYGRGPVLLDNVGCTGTEARLSDCFHLGWGQHNCGHHEDAGALCAGPEELGLQVQQAGSETTRMPSPRPRDGHLRLASGTHRCEGRVELFLGQRWGTVCDDAWDLRAAIVLCRQLGCGQALAAPGEAHFGPGRGPILLDNVKCRGDESTLLLCSHIRWDVHNCDHSEDASVLCQPL.

Residues 1–33 (MGPSERPSIGWTPKEAEMQIGPQPDGWSRGWKP) form a disordered region. Residues 1–58 (MGPSERPSIGWTPKEAEMQIGPQPDGWSRGWKPGDRGAVPLPLSPALSFLLLFPLASA) form the signal peptide. SRCR domains are found at residues 69 to 169 (LRLV…VLCD), 200 to 300 (VRLV…VLCA), 355 to 455 (LRLV…ALCA), and 484 to 584 (LRLA…VLCQ). Intrachain disulfides connect C94/C158, C107/C168, C138/C148, C225/C289, C238/C299, C269/C279, C380/C444, C393/C454, C424/C434, C509/C573, C522/C583, and C553/C563.

It is found in the secreted. In Mus musculus (Mouse), this protein is Scavenger receptor cysteine-rich domain-containing group B protein.